The chain runs to 155 residues: Vasotocin-neurophysin VT 2 (155 aa).

A signal peptide spans 1–20; the sequence is MSVCAVLLLCVAGLLCLSSA. Cysteine 21 and cysteine 26 are joined by a disulfide. Glycine 29 is modified (glycine amide). 7 disulfide bridges follow: cysteine 42-cysteine 86, cysteine 45-cysteine 59, cysteine 53-cysteine 76, cysteine 60-cysteine 66, cysteine 93-cysteine 106, cysteine 100-cysteine 118, and cysteine 107-cysteine 112. Over residues 119–128 the composition is skewed to acidic residues; the sequence is SEDSESEEPA. The tract at residues 119–139 is disordered; that stretch reads SEDSESEEPADQNTLGASPGE.

This sequence belongs to the vasopressin/oxytocin family.

It is found in the secreted. Its function is as follows. Vasotocin is an antidiuretic hormone. This is Vasotocin-neurophysin VT 2 from Catostomus commersonii (White sucker).